The chain runs to 1037 residues: Sentrin-specific protease 7 (1037 aa).

Residues 1–10 are compositionally biased toward basic residues; it reads MDRARPGRRR. 2 disordered regions span residues 1 to 27 and 185 to 399; these read MDRARPGRRRASSEIVTEGKRKKSSPA and SDTA…ENSS. Phosphoserine is present on residues serine 12, serine 13, and serine 25. Low complexity predominate over residues 192–208; it reads SEQLSSSSDGSLESCQS. The span at 272–282 shows a compositional bias: polar residues; it reads GTSNKNTSYSY. A compositionally biased stretch (basic residues) spans 290–300; sequence VSRKRKKRGRS. Basic and acidic residues-rich tracts occupy residues 301–321 and 328–341; these read NFHDSHNSKTSLDKPTEHTKE and VSRKLEESGEDSHQ. The span at 379–399 shows a compositional bias: low complexity; sequence ASSPNKSLESSASSEVSENSS. Phosphoserine is present on residues serine 434 and serine 435. The interval 747–1037 is protease; that stretch reads LGVTNEDLEC…HLQQQKGGSC (291 aa). Residue histidine 847 is part of the active site. The interval 873–909 is disordered; sequence QFQGQQSQHDHKMTDNDPHTTSTVSTSAEDSQSTEVN. The span at 880–890 shows a compositional bias: basic and acidic residues; sequence QHDHKMTDNDP. Residues 891–909 show a composition bias toward polar residues; sequence HTTSTVSTSAEDSQSTEVN. Residue aspartate 926 is part of the active site. Cysteine 979 functions as the Nucleophile in the catalytic mechanism.

The protein belongs to the peptidase C48 family.

It is found in the cytoplasm. Functionally, protease that acts as a positive regulator of the cGAS-STING pathway by catalyzing desumoylation of CGAS. Desumoylation of CGAS promotes DNA-binding activity of CGAS, subsequent oligomerization and activation. Deconjugates SUMO2 and SUMO3 from targeted proteins, but not SUMO1. Catalyzes the deconjugation of poly-SUMO2 and poly-SUMO3 chains. Has very low efficiency in processing full-length SUMO proteins to their mature forms. The chain is Sentrin-specific protease 7 from Mus musculus (Mouse).